We begin with the raw amino-acid sequence, 154 residues long: Ribonuclease P protein component (154 aa).

The protein belongs to the RnpA family. As to quaternary structure, consists of a catalytic RNA component (M1 or rnpB) and a protein subunit.

It catalyses the reaction Endonucleolytic cleavage of RNA, removing 5'-extranucleotides from tRNA precursor.. RNaseP catalyzes the removal of the 5'-leader sequence from pre-tRNA to produce the mature 5'-terminus. It can also cleave other RNA substrates such as 4.5S RNA. The protein component plays an auxiliary but essential role in vivo by binding to the 5'-leader sequence and broadening the substrate specificity of the ribozyme. This chain is Ribonuclease P protein component, found in Chlorobaculum tepidum (strain ATCC 49652 / DSM 12025 / NBRC 103806 / TLS) (Chlorobium tepidum).